The chain runs to 463 residues: Chromosomal replication initiator protein DnaA (463 aa).

The tract at residues 1 to 83 is domain I, interacts with DnaA modulators; the sequence is MSLSLWQQCL…LRFEVGSKPI (83 aa). A domain II region spans residues 83–126; sequence IVPVAVSSAASSGASVPPAAVRASSLARPSWERVTAQPELSYRS. The domain III, AAA+ region stretch occupies residues 127-343; sequence NVNPKHTFDN…GALNRVIANA (217 aa). Residues Gly-171, Gly-173, Lys-174, and Thr-175 each coordinate ATP. The segment at 344–463 is domain IV, binds dsDNA; the sequence is NFTGRAITID…FSNLIRTLSS (120 aa).

This sequence belongs to the DnaA family. Oligomerizes as a right-handed, spiral filament on DNA at oriC.

The protein localises to the cytoplasm. In terms of biological role, plays an essential role in the initiation and regulation of chromosomal replication. ATP-DnaA binds to the origin of replication (oriC) to initiate formation of the DNA replication initiation complex once per cell cycle. Binds the DnaA box (a 9 base pair repeat at the origin) and separates the double-stranded (ds)DNA. Forms a right-handed helical filament on oriC DNA; dsDNA binds to the exterior of the filament while single-stranded (ss)DNA is stabiized in the filament's interior. The ATP-DnaA-oriC complex binds and stabilizes one strand of the AT-rich DNA unwinding element (DUE), permitting loading of DNA polymerase. After initiation quickly degrades to an ADP-DnaA complex that is not apt for DNA replication. Binds acidic phospholipids. This is Chromosomal replication initiator protein DnaA from Edwardsiella ictaluri (strain 93-146).